The following is a 444-amino-acid chain: Multidrug resistance protein MdtA (444 aa).

The signal sequence occupies residues 1-20 (MKSQSKRTSRLFVFVGVVVA). Residues 37 to 52 (NNTSGAQQSARGQDTS) show a composition bias toward polar residues. 2 disordered regions span residues 37–60 (NNTS…RNTP) and 398–444 (TPRS…AEKS). Residues 406–419 (ANPASAEKAAAEAE) are compositionally biased toward low complexity. Positions 435–444 (ARSTTAAEKS) are enriched in polar residues.

It belongs to the membrane fusion protein (MFP) (TC 8.A.1) family. As to quaternary structure, part of a tripartite efflux system composed of MdtA, MdtB and MdtC.

It is found in the cell inner membrane. This is Multidrug resistance protein MdtA from Yersinia pestis bv. Antiqua (strain Antiqua).